We begin with the raw amino-acid sequence, 541 residues long: Chaperonin GroEL 1 (541 aa).

ATP contacts are provided by residues 29-32 (TLGP), 86-90 (DGTTT), Gly-413, 479-481 (NAA), and Asp-495.

It belongs to the chaperonin (HSP60) family. In terms of assembly, forms a cylinder of 14 subunits composed of two heptameric rings stacked back-to-back. Interacts with the co-chaperonin GroES.

It is found in the cytoplasm. It catalyses the reaction ATP + H2O + a folded polypeptide = ADP + phosphate + an unfolded polypeptide.. Functionally, together with its co-chaperonin GroES, plays an essential role in assisting protein folding. The GroEL-GroES system forms a nano-cage that allows encapsulation of the non-native substrate proteins and provides a physical environment optimized to promote and accelerate protein folding. This Synechocystis sp. (strain ATCC 27184 / PCC 6803 / Kazusa) protein is Chaperonin GroEL 1.